A 332-amino-acid polypeptide reads, in one-letter code: Anthranilate phosphoribosyltransferase (332 aa).

Residues Gly-79, 82–83 (GD), Ser-87, 89–92 (NIST), 107–115 (KHGNRSVSS), and Ser-119 contribute to the 5-phospho-alpha-D-ribose 1-diphosphate site. Gly-79 lines the anthranilate pocket. Residue Ser-91 coordinates Mg(2+). Residue Asn-110 coordinates anthranilate. Anthranilate is bound at residue Arg-165. Mg(2+)-binding residues include Asp-223 and Glu-224.

This sequence belongs to the anthranilate phosphoribosyltransferase family. As to quaternary structure, homodimer. Mg(2+) is required as a cofactor.

It carries out the reaction N-(5-phospho-beta-D-ribosyl)anthranilate + diphosphate = 5-phospho-alpha-D-ribose 1-diphosphate + anthranilate. It participates in amino-acid biosynthesis; L-tryptophan biosynthesis; L-tryptophan from chorismate: step 2/5. In terms of biological role, catalyzes the transfer of the phosphoribosyl group of 5-phosphorylribose-1-pyrophosphate (PRPP) to anthranilate to yield N-(5'-phosphoribosyl)-anthranilate (PRA). The polypeptide is Anthranilate phosphoribosyltransferase (Sodalis glossinidius (strain morsitans)).